A 342-amino-acid chain; its full sequence is tRNA dimethylallyltransferase (342 aa).

A compositionally biased stretch (polar residues) spans 1–13 (MNDTTAKTLNCSP). Residues 1–21 (MNDTTAKTLNCSPASRDGFPE) form a disordered region. 40–47 (GPTGVGKT) contributes to the ATP binding site. A substrate-binding site is contributed by 42–47 (TGVGKT). 2 interaction with substrate tRNA regions span residues 65–68 (DSMQ) and 189–193 (QRILR).

The protein belongs to the IPP transferase family. As to quaternary structure, monomer. Mg(2+) is required as a cofactor.

The catalysed reaction is adenosine(37) in tRNA + dimethylallyl diphosphate = N(6)-dimethylallyladenosine(37) in tRNA + diphosphate. In terms of biological role, catalyzes the transfer of a dimethylallyl group onto the adenine at position 37 in tRNAs that read codons beginning with uridine, leading to the formation of N6-(dimethylallyl)adenosine (i(6)A). The polypeptide is tRNA dimethylallyltransferase (Syntrophobacter fumaroxidans (strain DSM 10017 / MPOB)).